Here is an 868-residue protein sequence, read N- to C-terminus: MHEQYTPRDVEAAAQNAWDEQQSFAVTEQPGKETYYCLSMFPYPSGKLHMGHVRNYTIGDVIARYQRMLGKNVLQPMGWDAFGMPAENAAMKNNVAPAKWTYENIDYMKTQLKSLGLAIDWSREVTTCKPDYYRWEQWLFTRLFEKGVIYRKNGTVNWDPADQTVLANEQVIDGRGWRSGALIEKREIPMYYFRITDYADELLESLDELPGWPEQVKTMQRNWIGKSRGMEVQFPYDQASIGHEGTLKVFTTRPDTLMGATYVAVAAEHPLATQAAQGNAALQAFIDECKSGSVAEADMATQEKKGMATSLFVEHPLTGEKLPVWVANYVLMHYGDGAVMAVPAHDERDFEFAHKYNLPVKAVVRTSAGDDVGSEWLAAYGEHGQLINSGEFDGLDFQGAFDAIEAALIRKDLGKSRTQFRLRDWGISRQRYWGCPIPIIHCPSCGDVPVPEDQLPVTLPENVVPDGAGSPLARMPEFYECTCPKCGTAAKRETDTMDTFVESSWYFARYASPNYDKGLVDPKAANHWLPVDQYIGGIEHAILHLLYARFFHKLMRDEGLVTSNEPFKNLLTQGMVVAETYYRVASNGGKDWFNPADVEIERDAKAKIIGARLKTDGLPVEIGGTEKMSKSKNNGVDPQSMIEQYGADTCRLFMMFASPPDMSLEWSDSGVEGASRFLRRVWRLAQAHVAQGLPGQLDIAALSDEQKVIRRAIHAAIKQASTDVGQFHKFNTAIAQVMTVMNVLEKAPQVTAQDRALLQEGLEAVTLLLAPITPHISHELWKQLGHEQAVIDATWPSVDESALVQDTVTLVVQVNGKLRGQVEMPAAASREEIEAAARNNENVLRFTDGLTIRKVIVVPGKLVNIVAN.

Positions 42–52 (PYPSGKLHMGH) match the 'HIGH' region motif. The short motif at 627 to 631 (KMSKS) is the 'KMSKS' region element. K630 serves as a coordination point for ATP.

It belongs to the class-I aminoacyl-tRNA synthetase family.

The protein resides in the cytoplasm. The enzyme catalyses tRNA(Leu) + L-leucine + ATP = L-leucyl-tRNA(Leu) + AMP + diphosphate. In Pseudomonas entomophila (strain L48), this protein is Leucine--tRNA ligase.